The following is a 918-amino-acid chain: Plasma membrane ATPase 1 (918 aa).

Over residues 1–18 the composition is skewed to low complexity; it reads MTDTSSSSSSSSASSVSA. The interval 1 to 84 is disordered; that stretch reads MTDTSSSSSS…VPEEYLQTDP (84 aa). At 1–115 the chain is on the cytoplasmic side; the sequence is MTDTSSSSSS…ADEKESLVVK (115 aa). Residues 33 to 47 show a composition bias toward acidic residues; the sequence is AASESSDDDDIDALI. Serine 61 bears the Phosphoserine mark. Residues 116–136 form a helical membrane-spanning segment; the sequence is FVMFFVGPIQFVMEAAAILAA. The Extracellular portion of the chain corresponds to 137–140; the sequence is GLSD. Residues 141–160 traverse the membrane as a helical segment; that stretch reads WVDFGVICGLLMLNAGVGFV. At 161-291 the chain is on the cytoplasmic side; sequence QEFQAGSIVD…GQGHFTEVLN (131 aa). Threonine 175 is subject to Phosphothreonine. Lysine 252 participates in a covalent cross-link: Glycyl lysine isopeptide (Lys-Gly) (interchain with G-Cter in ubiquitin). The chain crosses the membrane as a helical span at residues 292–313; it reads GIGIILLVLVIATLLLVWTACF. Residues 314-325 lie on the Extracellular side of the membrane; it reads YRTNGIVRILRY. A helical membrane pass occupies residues 326–347; it reads TLGITIIGVPVGLPAVVTTTMA. Topologically, residues 348 to 719 are cytoplasmic; it reads VGAAYLAKKQ…IAILDNSLDI (372 aa). The active-site 4-aspartylphosphate intermediate is the aspartate 378. Residue lysine 555 forms a Glycyl lysine isopeptide (Lys-Gly) (interchain with G-Cter in ubiquitin) linkage. Mg(2+)-binding residues include aspartate 634 and aspartate 638. The chain crosses the membrane as a helical span at residues 720–738; the sequence is DLIVFIAIFADVATLAIAY. Topologically, residues 739 to 754 are extracellular; sequence DNAPYSPKPVKWNLPR. Residues 755-774 traverse the membrane as a helical segment; it reads LWGMSIILGIVLAIGSWITL. Residues 775-824 are Cytoplasmic-facing; that stretch reads TTMFLPKGGIIQNFGAMNGIMFLQISLTENWLIFITRAAGPFWSSIPSWQ. A helical transmembrane segment spans residues 825–845; the sequence is LAGAVFAVDIIATMFTLFGWW. Residues 846–857 lie on the Extracellular side of the membrane; that stretch reads SENWTDIVTVVR. A helical membrane pass occupies residues 858 to 874; the sequence is VWIWSIGIFCVLGGFYY. Topologically, residues 875–918 are cytoplasmic; it reads EMSTSEAFDRLMNGKPMKEKKSTRSVEDFMAAMQRVSTQHEKET. Serine 911 carries the post-translational modification Phosphoserine. Phosphothreonine occurs at positions 912 and 918.

The protein belongs to the cation transport ATPase (P-type) (TC 3.A.3) family. Type IIIA subfamily. In terms of assembly, interacts with its cargot receptor EXP1 for its transport within the cell and maturation. Phosphorylated on multiple Ser and Thr residues.

The protein resides in the cell membrane. It carries out the reaction ATP + H2O + H(+)(in) = ADP + phosphate + 2 H(+)(out). The plasma membrane ATPase of plants and fungi is a hydrogen ion pump. The proton gradient it generates drives the active transport of nutrients by H(+)-symport. The resulting external acidification and/or internal alkinization may mediate growth responses. The chain is Plasma membrane ATPase 1 (PMA1) from Saccharomyces cerevisiae (strain ATCC 204508 / S288c) (Baker's yeast).